The primary structure comprises 194 residues: A-type ATP synthase subunit E (194 aa).

It belongs to the V-ATPase E subunit family. Has multiple subunits with at least A(3), B(3), C, D, E, F, H, I and proteolipid K(x).

Its subcellular location is the cell membrane. Functionally, component of the A-type ATP synthase that produces ATP from ADP in the presence of a proton gradient across the membrane. This is A-type ATP synthase subunit E from Saccharolobus islandicus (strain M.16.27) (Sulfolobus islandicus).